A 211-amino-acid polypeptide reads, in one-letter code: Bifunctional transcriptional activator/DNA repair enzyme AdaA (211 aa).

Catalysis depends on C54, which acts as the Nucleophile; methyl group acceptor from methylphosphotriester. 4 residues coordinate Zn(2+): C54, C58, C85, and C88. Residues 102–200 (DLITEYIDKN…GQTPARFRQM (99 aa)) enclose the HTH araC/xylS-type domain. Residues 119-140 (ESLADICHGSPYHMHRTFKKIK) constitute a DNA-binding region (H-T-H motif).

Zn(2+) serves as cofactor.

The enzyme catalyses (2'-deoxyribonucleoside 5'-methylphosphotriester)-DNA + L-cysteinyl-[protein] = 2'-deoxyribonucleotide-DNA + S-methyl-L-cysteinyl-[protein] + H(+). Functionally, is involved in the adaptive response to alkylation damage in DNA caused by alkylating agents. Repairs the methylphosphotriester lesions in DNA by a direct and irreversible transfer of the methyl group to one of its own cysteine residues. In terms of biological role, the methylation of AdaA by methylphosphotriesters in DNA leads to its activation as a transcriptional regulator that activates the transcription of the ada operon which consists of adaA and adaB, and of the adjacent gene alkA. This chain is Bifunctional transcriptional activator/DNA repair enzyme AdaA (adaA), found in Bacillus subtilis (strain 168).